The following is a 400-amino-acid chain: Argininosuccinate synthase (400 aa).

Position 8-16 (8-16 (AYSGGLDTS)) interacts with ATP. Tyr87 provides a ligand contact to L-citrulline. Gly117 is an ATP binding site. Thr119, Asn123, and Asp124 together coordinate L-aspartate. Asn123 is an L-citrulline binding site. L-citrulline-binding residues include Arg127, Ser175, Glu260, and Tyr272.

This sequence belongs to the argininosuccinate synthase family. Type 1 subfamily. In terms of assembly, homotetramer.

It localises to the cytoplasm. It catalyses the reaction L-citrulline + L-aspartate + ATP = 2-(N(omega)-L-arginino)succinate + AMP + diphosphate + H(+). It functions in the pathway amino-acid biosynthesis; L-arginine biosynthesis; L-arginine from L-ornithine and carbamoyl phosphate: step 2/3. The protein is Argininosuccinate synthase of Mycolicibacterium vanbaalenii (strain DSM 7251 / JCM 13017 / BCRC 16820 / KCTC 9966 / NRRL B-24157 / PYR-1) (Mycobacterium vanbaalenii).